The following is a 148-amino-acid chain: SsrA-binding protein (148 aa).

The tract at residues 123–148 (KLHDKRETEKKRDWEREKARIMRSAT) is disordered. Residues 126–142 (DKRETEKKRDWEREKAR) show a composition bias toward basic and acidic residues.

It belongs to the SmpB family.

The protein resides in the cytoplasm. Required for rescue of stalled ribosomes mediated by trans-translation. Binds to transfer-messenger RNA (tmRNA), required for stable association of tmRNA with ribosomes. tmRNA and SmpB together mimic tRNA shape, replacing the anticodon stem-loop with SmpB. tmRNA is encoded by the ssrA gene; the 2 termini fold to resemble tRNA(Ala) and it encodes a 'tag peptide', a short internal open reading frame. During trans-translation Ala-aminoacylated tmRNA acts like a tRNA, entering the A-site of stalled ribosomes, displacing the stalled mRNA. The ribosome then switches to translate the ORF on the tmRNA; the nascent peptide is terminated with the 'tag peptide' encoded by the tmRNA and targeted for degradation. The ribosome is freed to recommence translation, which seems to be the essential function of trans-translation. In Burkholderia thailandensis (strain ATCC 700388 / DSM 13276 / CCUG 48851 / CIP 106301 / E264), this protein is SsrA-binding protein.